Here is a 294-residue protein sequence, read N- to C-terminus: uncharacterized protein (294 aa).

The tract at residues 259–294 (LNAPTPIPPPITSHAGQEEALKPQRASKGKKAKARK) is disordered. Basic residues predominate over residues 283–294 (RASKGKKAKARK).

This is an uncharacterized protein from Homo sapiens (Human).